Here is a 277-residue protein sequence, read N- to C-terminus: Cell death abnormality protein 2 (277 aa).

Residues 14–112 form the SH2 domain; sequence FYFPGMSRED…EASLLSAYKK (99 aa). An SH3 1 domain is found at 113–173; sequence PIIEVVVGTF…PANYVQVQSG (61 aa). The segment at 179–217 is disordered; it reads RISKGTSQSSIGSSGNGAERFSSTSTSSENAEAHPTLPT. The segment covering 182 to 206 has biased composition (low complexity); that stretch reads KGTSQSSIGSSGNGAERFSSTSTSS. The SH3 2 domain occupies 214–275; the sequence is TLPTTAKVTF…PFTYIRFNTA (62 aa).

It belongs to the CRK family. In terms of assembly, interacts with ced-5 (via C-terminus which contains a candidate SH3-binding, proline-rich region). Forms a ternary complex with ced-5 and ced-12. Interacts (via SH-2 domain) with src-1 (when activated and phosphorylated at 'Tyr-416').

Its function is as follows. Required for cell migration and engulfment of cell corpses but not for programmed cell death/apoptosis. Also has a role in the migration of the 2 gonadal distal tip cells (DTCs). In Caenorhabditis briggsae, this protein is Cell death abnormality protein 2.